We begin with the raw amino-acid sequence, 188 residues long: uncharacterized protein (188 aa).

A disordered region spans residues 133-153; it reads PKGRPTMKLQYPKMPPKPKTR.

Belongs to the IS150/IS1296 orfA family.

This is an uncharacterized protein from Haemophilus influenzae (strain ATCC 51907 / DSM 11121 / KW20 / Rd).